Reading from the N-terminus, the 361-residue chain is Probable dual-specificity RNA methyltransferase RlmN (361 aa).

The active-site Proton acceptor is the E91. The Radical SAM core domain occupies 97–335; that stretch reads QHYGLSVCVT…CVVRQEHGTD (239 aa). The cysteines at positions 104 and 340 are disulfide-linked. [4Fe-4S] cluster-binding residues include C111, C115, and C118. S-adenosyl-L-methionine contacts are provided by residues 163-164, S195, 218-220, and N296; these read GE and SLH. C340 (S-methylcysteine intermediate) is an active-site residue.

This sequence belongs to the radical SAM superfamily. RlmN family. [4Fe-4S] cluster is required as a cofactor.

The protein resides in the cytoplasm. The enzyme catalyses adenosine(2503) in 23S rRNA + 2 reduced [2Fe-2S]-[ferredoxin] + 2 S-adenosyl-L-methionine = 2-methyladenosine(2503) in 23S rRNA + 5'-deoxyadenosine + L-methionine + 2 oxidized [2Fe-2S]-[ferredoxin] + S-adenosyl-L-homocysteine. It carries out the reaction adenosine(37) in tRNA + 2 reduced [2Fe-2S]-[ferredoxin] + 2 S-adenosyl-L-methionine = 2-methyladenosine(37) in tRNA + 5'-deoxyadenosine + L-methionine + 2 oxidized [2Fe-2S]-[ferredoxin] + S-adenosyl-L-homocysteine. Its function is as follows. Specifically methylates position 2 of adenine 2503 in 23S rRNA and position 2 of adenine 37 in tRNAs. This is Probable dual-specificity RNA methyltransferase RlmN from Streptococcus mutans serotype c (strain ATCC 700610 / UA159).